We begin with the raw amino-acid sequence, 363 residues long: MKKYIVFAIIPFLFACSSSTLNDDYDEAFAKDTQGLDILTGQFSHNIDQIWGVNELLVASRKDYVKYTDNFYTRSHISFDEGSIMIETLGDKSRLYHSIIHTLLMGADAKGIDLFTSGDVPISSRPFLVGLVVDHKGKQVKNIATASNFANYLLQNKLQTRYLTNGNPVQYVIIPMVANHVAVRAQRYLPLIRKAAGRYGIDESLILGIMQTESSFNPYAISYANAIGLMQVVPHTAGRDVFRLKGLNGQPSKKYLFNPAKNIDTGVAYLTLLRDKYLDGITNPTSKRFAMISAYNSGAGAVLRVFHNDRDIAINKINRLYPEQVYRILTTMHPSEQARNYLLKVDKAQKSYRVIKNSESDLP.

The N-terminal stretch at 1-15 (MKKYIVFAIIPFLFA) is a signal peptide. The N-palmitoyl cysteine moiety is linked to residue Cys16. Cys16 is lipidated: S-diacylglycerol cysteine.

This sequence belongs to the transglycosylase Slt family.

The protein resides in the cell outer membrane. It carries out the reaction Exolytic cleavage of the (1-&gt;4)-beta-glycosidic linkage between N-acetylmuramic acid (MurNAc) and N-acetylglucosamine (GlcNAc) residues in peptidoglycan, from either the reducing or the non-reducing ends of the peptidoglycan chains, with concomitant formation of a 1,6-anhydrobond in the MurNAc residue.. In terms of biological role, murein-degrading enzyme. May play a role in recycling of muropeptides during cell elongation and/or cell division. This is Membrane-bound lytic murein transglycosylase C from Histophilus somni (strain 129Pt) (Haemophilus somnus).